We begin with the raw amino-acid sequence, 435 residues long: 5-methylthioadenosine/S-adenosylhomocysteine deaminase (435 aa).

Residues His-65 and His-67 each contribute to the Zn(2+) site. Substrate-binding residues include Glu-94, Arg-150, and His-189. His-216 is a binding site for Zn(2+). Substrate contacts are provided by Glu-219 and Asp-304. Asp-304 provides a ligand contact to Zn(2+).

It belongs to the metallo-dependent hydrolases superfamily. MTA/SAH deaminase family. Zn(2+) serves as cofactor.

It catalyses the reaction S-adenosyl-L-homocysteine + H2O + H(+) = S-inosyl-L-homocysteine + NH4(+). The catalysed reaction is S-methyl-5'-thioadenosine + H2O + H(+) = S-methyl-5'-thioinosine + NH4(+). Its function is as follows. Catalyzes the deamination of 5-methylthioadenosine and S-adenosyl-L-homocysteine into 5-methylthioinosine and S-inosyl-L-homocysteine, respectively. Is also able to deaminate adenosine. This is 5-methylthioadenosine/S-adenosylhomocysteine deaminase from Bacillus cereus (strain ATCC 14579 / DSM 31 / CCUG 7414 / JCM 2152 / NBRC 15305 / NCIMB 9373 / NCTC 2599 / NRRL B-3711).